The primary structure comprises 1100 residues: Lysylphosphatidylglycerol biosynthesis bifunctional protein LysX (1100 aa).

The tract at residues 1 to 601 is phosphatidylglycerol lysyltransferase; sequence MTPTSLARAR…LLHSDGTAPD (601 aa). 7 consecutive transmembrane segments (helical) span residues 18-38, 60-80, 84-104, 112-132, 154-174, 206-226, and 314-332; these read VPAA…LASV, FPDT…ALAA, IAWW…IAGL, FAEV…AFLL, LVAS…LFPG, VFVN…TAIV, and AYGW…AQAF. Positions 602-1100 are lysine--tRNA ligase; sequence GMGLQADLAD…TLPFPLAKPR (499 aa). Residues 661–739 constitute a DNA-binding region (OB); the sequence is VAVAGRVLRS…SLLVSGWRLI (79 aa). Aspartate 1012 and glutamate 1019 together coordinate Mg(2+).

This sequence in the N-terminal section; belongs to the LPG synthetase family. It in the C-terminal section; belongs to the class-II aminoacyl-tRNA synthetase family. Mg(2+) serves as cofactor.

The protein resides in the cell membrane. It catalyses the reaction tRNA(Lys) + L-lysine + ATP = L-lysyl-tRNA(Lys) + AMP + diphosphate. The catalysed reaction is L-lysyl-tRNA(Lys) + a 1,2-diacyl-sn-glycero-3-phospho-(1'-sn-glycerol) = a 1,2-diacyl-sn-glycero-3-phospho-1'-(3'-O-L-lysyl)-sn-glycerol + tRNA(Lys). Its function is as follows. Catalyzes the production of L-lysyl-tRNA(Lys)transfer and the transfer of a lysyl group from L-lysyl-tRNA(Lys) to membrane-bound phosphatidylglycerol (PG), which produces lysylphosphatidylglycerol (LPG), one of the components of the bacterial membrane with a positive net charge. LPG synthesis contributes to the resistance to cationic antimicrobial peptides (CAMPs) and likely protects M.tuberculosis against the CAMPs produced by competiting microorganisms (bacteriocins). In fact, the modification of anionic phosphatidylglycerol with positively charged L-lysine results in repulsion of the peptides. The sequence is that of Lysylphosphatidylglycerol biosynthesis bifunctional protein LysX (lysX) from Mycolicibacterium vanbaalenii (strain DSM 7251 / JCM 13017 / BCRC 16820 / KCTC 9966 / NRRL B-24157 / PYR-1) (Mycobacterium vanbaalenii).